The sequence spans 757 residues: Mitofusin-2 (757 aa).

At 1–604 (MSLLFSRCNS…TQEELMVSMV (604 aa)) the chain is on the cytoplasmic side. Residues 30 to 94 (KHFVTAKKKI…VRGISEVLAR (65 aa)) form a part of a helix bundle domain, formed by helices from N-terminal and C-terminal regions region. The Dynamin-type G domain maps to 93–342 (ARRHMKVAFF…VRMFEFQNFE (250 aa)). The G1 motif stretch occupies residues 103 to 110 (GRTSNGKS). 106 to 111 (SNGKST) serves as a coordination point for GTP. At Thr111 the chain carries Phosphothreonine; by PINK1. Residues 129–130 (TT) are G2 motif. The segment at 199–202 (DSPG) is G3 motif. 258–261 (NRWD) is a GTP binding site. The segment at 258-261 (NRWD) is G4 motif. A region of interest (G5 motif) is located at residue Glu288. Ser305 and Lys307 together coordinate GTP. The tract at residues 359–385 (EQHTVRAKQIAEAVRLIMDSLHIAAQE) is part of a helix bundle domain, formed by helices from N-terminal and C-terminal regions. Positions 406 to 435 (KQLELLAQDYKLRIKQMTEEVERQVSTAMA) form a coiled coil. Residue Ser442 is modified to Phosphoserine; by PINK1. Residues 605–625 (TGLASLTSRTSMGILVVGGVV) traverse the membrane as a helical segment. Trp626 is a topological domain (mitochondrial intermembrane). The helical transmembrane segment at 627-647 (KAVGWRLIALSFGLYGLLYVY) threads the bilayer. Over 648 to 757 (ERLTWTTRAK…FIHQYLQPSR (110 aa)) the chain is Cytoplasmic. Residues 696–738 (FAHLCQQVDITRDNLEQEIAAMNKKVEALDSLQSKAKLLRNKA) adopt a coiled-coil conformation. Residues 722-753 (EALDSLQSKAKLLRNKAGWLDSELNMFIHQYL) are part of a helix bundle domain, formed by helices from N-terminal and C-terminal regions.

Belongs to the TRAFAC class dynamin-like GTPase superfamily. Dynamin/Fzo/YdjA family. Mitofusin subfamily. As to quaternary structure, forms homomultimers and heteromultimers with MFN1. Oligomerization is essential for mitochondrion fusion. Interacts with VAT1. Interacts with STOML2; may form heterooligomers. Interacts (phosphorylated) with PRKN. Interacts with EIF2AK3. Interacts with THG1L; THG1L probably functions as a guanyl-nucleotide exchange factor/GEF, activating MFN2. Post-translationally, phosphorylated by PINK1. Ubiquitinated by non-degradative ubiquitin by PRKN, promoting mitochondrial fusion; deubiquitination by USP30 inhibits mitochondrial fusion. Ubiquitinated by HUWE1 when dietary stearate (C18:0) levels are low; ubiquitination inhibits mitochondrial fusion. Ubiquitous. In brain, it is more expressed than MFN1, while it is expressed at a weaker level than MFN1 in heart and testis. Expressed at high level in elongating spermatids of seminiferous tubules. Expression is markedly down-regulated in highly proliferative vascular smooth muscle cells (VSMCs) from the genetic hypertensive animal model SHR, as well as in balloon-injured Wistar Kyoto arteries.

The protein localises to the mitochondrion outer membrane. The catalysed reaction is GTP + H2O = GDP + phosphate + H(+). In terms of biological role, mitochondrial outer membrane GTPase that mediates mitochondrial clustering and fusion. Mitochondria are highly dynamic organelles, and their morphology is determined by the equilibrium between mitochondrial fusion and fission events. Overexpression induces the formation of mitochondrial networks. Membrane clustering requires GTPase activity and may involve a major rearrangement of the coiled coil domains. Plays a central role in mitochondrial metabolism and may be associated with obesity and/or apoptosis processes. Plays an important role in the regulation of vascular smooth muscle cell proliferation. Involved in the clearance of damaged mitochondria via selective autophagy (mitophagy). Is required for PRKN recruitment to dysfunctional mitochondria. Involved in the control of unfolded protein response (UPR) upon ER stress including activation of apoptosis and autophagy during ER stress. Acts as an upstream regulator of EIF2AK3 and suppresses EIF2AK3 activation under basal conditions. In Rattus norvegicus (Rat), this protein is Mitofusin-2 (Mfn2).